The chain runs to 364 residues: DNA replication and repair protein RecF (364 aa).

ATP is bound at residue 30–37; the sequence is GENGSGKT.

The protein belongs to the RecF family.

The protein resides in the cytoplasm. In terms of biological role, the RecF protein is involved in DNA metabolism; it is required for DNA replication and normal SOS inducibility. RecF binds preferentially to single-stranded, linear DNA. It also seems to bind ATP. This Xylella fastidiosa (strain M23) protein is DNA replication and repair protein RecF.